The primary structure comprises 452 residues: Envelope glycoprotein D (452 aa).

A signal peptide spans 1-19 (MPAVLLVLYVNPPPSVCIL). At 20–405 (TQKLSLGLYN…NSTFVGISVG (386 aa)) the chain is on the virion surface side. N103 and N111 each carry an N-linked (GlcNAc...) asparagine; by host glycan. Disulfide bonds link C138–C259, C176–C273, and C188–C197. The segment at 331–365 (PDNHPGFDSVESEITQNKTDPKPGQADPKPNQPFK) is disordered. N347 and N396 each carry an N-linked (GlcNAc...) asparagine; by host glycan. The helical transmembrane segment at 406 to 422 (LGIAGLVLVGVILYVCL) threads the bilayer. The Intravirion portion of the chain corresponds to 423-452 (RRKKELKKSAQNGLTRLRSTFKDVKYTQLP).

This sequence belongs to the herpesviridae glycoprotein D family.

The protein localises to the virion membrane. Its function is as follows. Envelope glycoprotein that binds to host cell entry receptors, promoting the virus entry into host cells. May trigger fusion with host membrane, by recruiting the fusion machinery composed of gB and gH/gL. This Equine herpesvirus 1 (strain Ab4p) (EHV-1) protein is Envelope glycoprotein D (gD).